A 122-amino-acid polypeptide reads, in one-letter code: MIQPQTYLNVADNSGARKLMCIRVIGTSNRKYANIGDIIIAVVKEAVPNMPIKKSEIVRAVIVRTCKEFKRNNGSIIKFDDNAAVVINQEGNPKGTRVFGPIARELRESNFTKIVSLAPEVL.

It belongs to the universal ribosomal protein uL14 family. As to quaternary structure, part of the 50S ribosomal subunit.

Its subcellular location is the plastid. The protein resides in the chloroplast. Binds to 23S rRNA. This Marchantia polymorpha (Common liverwort) protein is Large ribosomal subunit protein uL14c.